Here is a 338-residue protein sequence, read N- to C-terminus: Ketol-acid reductoisomerase (NADP(+)) (338 aa).

Positions 1 to 181 (MRVYYDKDCD…GGGRSGIIET (181 aa)) constitute a KARI N-terminal Rossmann domain. NADP(+) is bound by residues 24–27 (YGSQ), Arg47, Ser50, Ser52, and 82–85 (DENQ). The active site involves His107. NADP(+) is bound at residue Gly133. The region spanning 182–327 (TFKDETETDL…EKLRGMMPWI (146 aa)) is the KARI C-terminal knotted domain. Residues Asp190, Glu194, Glu226, and Glu230 each contribute to the Mg(2+) site. Residue Ser251 coordinates substrate.

The protein belongs to the ketol-acid reductoisomerase family. It depends on Mg(2+) as a cofactor.

It catalyses the reaction (2R)-2,3-dihydroxy-3-methylbutanoate + NADP(+) = (2S)-2-acetolactate + NADPH + H(+). It carries out the reaction (2R,3R)-2,3-dihydroxy-3-methylpentanoate + NADP(+) = (S)-2-ethyl-2-hydroxy-3-oxobutanoate + NADPH + H(+). Its pathway is amino-acid biosynthesis; L-isoleucine biosynthesis; L-isoleucine from 2-oxobutanoate: step 2/4. It participates in amino-acid biosynthesis; L-valine biosynthesis; L-valine from pyruvate: step 2/4. In terms of biological role, involved in the biosynthesis of branched-chain amino acids (BCAA). Catalyzes an alkyl-migration followed by a ketol-acid reduction of (S)-2-acetolactate (S2AL) to yield (R)-2,3-dihydroxy-isovalerate. In the isomerase reaction, S2AL is rearranged via a Mg-dependent methyl migration to produce 3-hydroxy-3-methyl-2-ketobutyrate (HMKB). In the reductase reaction, this 2-ketoacid undergoes a metal-dependent reduction by NADPH to yield (R)-2,3-dihydroxy-isovalerate. The sequence is that of Ketol-acid reductoisomerase (NADP(+)) from Chromohalobacter salexigens (strain ATCC BAA-138 / DSM 3043 / CIP 106854 / NCIMB 13768 / 1H11).